Reading from the N-terminus, the 417-residue chain is Squalene synthase (417 aa).

2 residues coordinate NADP(+): arginine 52 and arginine 77. Residues aspartate 80, glutamate 83, and aspartate 84 each contribute to the Mg(2+) site. An NADP(+)-binding site is contributed by arginine 218. Residues 284-304 (SIFNFCAIPQVMAIATLAACY) form a helical membrane-spanning segment. NADP(+)-binding residues include lysine 315 and arginine 317. Residues 384-404 (PIYLSFVMLLAALSWQYLSTL) form a helical membrane-spanning segment.

Belongs to the phytoene/squalene synthase family. Mg(2+) is required as a cofactor.

The protein resides in the endoplasmic reticulum membrane. It catalyses the reaction 2 (2E,6E)-farnesyl diphosphate + NADPH + H(+) = squalene + 2 diphosphate + NADP(+). The enzyme catalyses 2 (2E,6E)-farnesyl diphosphate + NADH + H(+) = squalene + 2 diphosphate + NAD(+). It carries out the reaction presqualene diphosphate + NADH + H(+) = squalene + diphosphate + NAD(+). The catalysed reaction is presqualene diphosphate + NADPH + H(+) = squalene + diphosphate + NADP(+). It catalyses the reaction 2 (2E,6E)-farnesyl diphosphate = presqualene diphosphate + diphosphate. Its pathway is terpene metabolism; lanosterol biosynthesis; lanosterol from farnesyl diphosphate: step 1/3. Its function is as follows. Catalyzes the condensation of 2 farnesyl pyrophosphate (FPP) moieties to form squalene. Proceeds in two distinct steps. In the first half-reaction, two molecules of FPP react to form the stable presqualene diphosphate intermediate (PSQPP), with concomitant release of a proton and a molecule of inorganic diphosphate. In the second half-reaction, PSQPP undergoes heterolysis, isomerization, and reduction with NADPH or NADH to form squalene. It is the first committed enzyme of the sterol biosynthesis pathway. This Bos taurus (Bovine) protein is Squalene synthase (FDFT1).